Here is a 344-residue protein sequence, read N- to C-terminus: Tetraacyldisaccharide 4'-kinase (344 aa).

65–72 (HAGGTGKT) provides a ligand contact to ATP.

The protein belongs to the LpxK family.

The enzyme catalyses a lipid A disaccharide + ATP = a lipid IVA + ADP + H(+). It participates in glycolipid biosynthesis; lipid IV(A) biosynthesis; lipid IV(A) from (3R)-3-hydroxytetradecanoyl-[acyl-carrier-protein] and UDP-N-acetyl-alpha-D-glucosamine: step 6/6. Transfers the gamma-phosphate of ATP to the 4'-position of a tetraacyldisaccharide 1-phosphate intermediate (termed DS-1-P) to form tetraacyldisaccharide 1,4'-bis-phosphate (lipid IVA). The sequence is that of Tetraacyldisaccharide 4'-kinase from Neisseria meningitidis serogroup A / serotype 4A (strain DSM 15465 / Z2491).